The sequence spans 699 residues: Endogenous retrovirus group K member 19 Env polyprotein (699 aa).

The segment at 1–47 (MNPSEMQRKAPPRRRRHRNRAPLTHKMNKMVTSEEQMKLPSTKKAEP) is disordered. An N-terminal signal peptide occupies residues 1-89 (MNPSEMQRKA…ALMIVSMVVS (89 aa)). The span at 10–20 (APPRRRRHRNR) shows a compositional bias: basic residues. Topologically, residues 90–632 (LPMPAGAAAA…NLNPVTWVKT (543 aa)) are extracellular. Residues Asn-100, Asn-128, Asn-153, Asn-274, Asn-355, Asn-372, and Asn-461 are each glycosylated (N-linked (GlcNAc...) asparagine). Residues 466 to 486 (FIFTLIAVIMGLIAVTATAAV) are fusion peptide. N-linked (GlcNAc...) asparagine glycosylation is found at Asn-507, Asn-554, Asn-566, and Asn-585. Residues 633-653 (IGSTTIINLILILVCLFCLLL) traverse the membrane as a helical segment. The Cytoplasmic segment spans residues 654 to 699 (VCRCTQQLRRDSDHRERAMMTMAVLSKRKGGNVGKSKRDQIVTVSV).

This sequence belongs to the beta type-B retroviral envelope protein family. HERV class-II K(HML-2) env subfamily. As to quaternary structure, the surface (SU) and transmembrane (TM) proteins form a heterodimer. SU and TM are attached by noncovalent interactions or by a labile interchain disulfide bond. In terms of processing, specific enzymatic cleavages in vivo yield the mature SU and TM proteins.

The protein localises to the cell membrane. It localises to the virion. In terms of biological role, retroviral envelope proteins mediate receptor recognition and membrane fusion during early infection. Endogenous envelope proteins may have kept, lost or modified their original function during evolution. This endogenous envelope protein has lost its original fusogenic properties. SU mediates receptor recognition. Functionally, TM anchors the envelope heterodimer to the viral membrane through one transmembrane domain. The other hydrophobic domain, called fusion peptide, mediates fusion of the viral membrane with the target cell membrane. This chain is Endogenous retrovirus group K member 19 Env polyprotein (ERVK-19), found in Homo sapiens (Human).